Consider the following 428-residue polypeptide: Flotillin-2 (428 aa).

The N-myristoyl glycine moiety is linked to residue glycine 2. Cysteine 4 carries the S-palmitoyl cysteine; by ZDHHC5 lipid modification. Residue cysteine 19 is the site of S-palmitoyl cysteine attachment. A lipid anchor (S-palmitoyl cysteine; by ZDHHC5) is attached at cysteine 20. At serine 405 the chain carries Phosphoserine.

This sequence belongs to the band 7/mec-2 family. Flotillin subfamily. In terms of assembly, heterooligomeric complex of flotillin-1 and flotillin-2 and caveolin-1 and caveolin-2. Interacts with ECPAS. In terms of processing, ZDHHC5-catalyzed palmitoylation predominantly occurs at Cys-4. ZDHHC5-catalyzed palmitoylation may be required for the formation of higher-order complexes and for neurite outgrowth in cultured neural stem cells. As to expression, in skin, expressed in epidermis and epidermal appendages but not in dermis. Expressed in all layers of the epidermis except the basal layer. In hair follicles, expressed in the suprabasal layer but not the basal layer. Also expressed in melanoma and carcinoma cell lines, fibroblasts and foreskin melanocytes.

The protein resides in the cell membrane. It is found in the membrane. The protein localises to the caveola. Its subcellular location is the endosome. Functionally, may act as a scaffolding protein within caveolar membranes, functionally participating in formation of caveolae or caveolae-like vesicles. May be involved in epidermal cell adhesion and epidermal structure and function. The sequence is that of Flotillin-2 (FLOT2) from Homo sapiens (Human).